The following is a 1051-amino-acid chain: SWI/SNF-related matrix-associated actin-dependent regulator of chromatin subfamily A member 5 (1051 aa).

Positions 1 to 15 (MSSAVEPPPPPPPES) are enriched in pro residues. Positions 1-81 (MSSAVEPPPP…IQEPDPTYEE (81 aa)) are disordered. At Ser-2 the chain carries N-acetylserine. Over residues 24-38 (GAGGSSSGNKGGPEG) the composition is skewed to gly residues. A compositionally biased stretch (low complexity) spans 39–53 (GAAPAAPCAAGSGPA). Thr-55 carries the post-translational modification Phosphothreonine. Phosphoserine is present on Ser-65. A compositionally biased stretch (basic and acidic residues) spans 68-81 (KQKEIQEPDPTYEE). Residue Lys-82 forms a Glycyl lysine isopeptide (Lys-Gly) (interchain with G-Cter in SUMO2) linkage. A Phosphothreonine modification is found at Thr-112. Phosphoserine is present on residues Ser-115, Ser-136, and Ser-170. The 166-residue stretch at 191–356 (ISLYENGING…WSLLNFLLPD (166 aa)) folds into the Helicase ATP-binding domain. 204-211 (DEMGLGKT) provides a ligand contact to ATP. A DEAH box motif is present at residues 307 to 310 (DEAH). The residue at position 439 (Lys-439) is an N6-acetyllysine. The Helicase C-terminal domain occupies 486-637 (VLDKLLPKLK…SIVIQQGRLV (152 aa)). Residues Lys-643, Lys-646, Lys-693, Lys-721, and Lys-734 each participate in a glycyl lysine isopeptide (Lys-Gly) (interchain with G-Cter in SUMO2) cross-link. Residue Ser-754 is modified to Phosphoserine. SANT domains follow at residues 839-891 (QGFT…ERCN) and 942-1006 (KGKN…LITL). Lys-965 participates in a covalent cross-link: Glycyl lysine isopeptide (Lys-Gly) (interchain with G-Cter in SUMO2). Residues 1014 to 1051 (LEEKEKAEKKKRGPKPSTQKRKMDGAPDGRGRKKKLKL) are disordered. Over residues 1022–1033 (KKKRGPKPSTQK) the composition is skewed to basic residues. Positions 1034-1043 (RKMDGAPDGR) are enriched in basic and acidic residues.

Belongs to the SNF2/RAD54 helicase family. ISWI subfamily. In terms of assembly, component of the ACF-5 ISWI chromatin-remodeling complex (also called the ACF/WCRF complex) at least composed of SMARCA5/SNF2H and BAZ1A/ACF1, which regulates the spacing of histone octamers on the DNA template to facilitate access to DNA. Within the complex interacts with BAZ1A/ACF1; the interaction is direct and is required to slide nucleosomes from end to center positions on a DNA template in an ATP-dependent manner. Component of the CHRAC ISWI chromatin-remodeling complex at least composed of SMARCA5/SNF2H, BAZ1A/ACF1, CHRAC1 and POLE3; the complex preferentially binds DNA through the CHRAC1-POLE3 heterodimer and possesses ATP-dependent nucleosome-remodeling activity. Within the complex interacts with BAZ1A/ACF1; the interaction is direct and promotes the interaction with the POLE3-CHRAC1 heterodimer. Within the complex interacts with the POLE3-CHRAC1 heterodimer; the interaction is direct and enhances nucleosome sliding activity by the SMARCA5/SNF2H and BAZ1A/ACF1 interaction. Neither POLE3 nor CHRAC1 enhances nucleosome sliding activity of the ACF-5 ISWI chromatin remodeling complex. Component of the WICH-5 ISWI chromatin-remodeling complex (also called the WICH complex) at least composed of SMARCA5/SNF2H and BAZ1B/WSTF, which regulates the spacing of histone octamers on the DNA template to facilitate access to DNA. Within the complex interacts with BAZ1B/WSTF. Component of the NoRC-5 ISWI chromatin-remodeling complex (also called the NoRC chromatin-remodeling complex) at least composed of SMARCA5/SNF2H and BAZ2A/TIP5; the complex suppresses rDNA transcription by a combination of nucleosome remodeling, histone deacetylation, and DNA methylation. Within the complex interacts with BAZ2A/TIP5. Within the complex interacts with HDAC1. Component of the BRF-5 ISWI chromatin-remodeling complex at least composed of SMARCA5/SNF2H and BAZ2B. Within the complex interacts with BAZ2B. Component of the NURF-5 ISWI chromatin-remodeling complex at least composed of SMARCA5/SNF2H and BPTF. Within the complex interacts with BPFT. Component of the CERF-5 ISWI chromatin-remodeling complex at least composed of SMARCA5/SNF2H and CECR2. LUZP1 is detected as part of the CERF-5 complex in embryonic stem cells where it is involved in complex stabilization but is not detected in the complex in the testis. Component of the RSF-5 ISWI chromatin-remodeling complex (also called the RSF complex) at least composed of SMARCA5/SNF2H and RSF1. Within the complex interacts with RSF1. Interacts with the cohesin complex component RAD21; the interaction is direct. Interacts with the NuRD complex components HDAC2, RBBP4 and CHD4; the interactions are direct. Interacts with PCNA. Component of the B-WICH complex, at least composed of SMARCA5/SNF2H, BAZ1B/WSTF, SF3B1, DEK, MYO1C, ERCC6, MYBBP1A and DDX21 which positively regulates RNA polymerase III transcription. Interacts with MYO1C. Interacts with BEND3. Interacts with SIRT6; promoting recruitment to DNA damage sites. Ubiquitously expressed.

It localises to the nucleus. It is found in the chromosome. It catalyses the reaction ATP + H2O = ADP + phosphate + H(+). ATPase that possesses intrinsic ATP-dependent nucleosome-remodeling activity. Catalytic subunit of ISWI chromatin-remodeling complexes, which form ordered nucleosome arrays on chromatin and facilitate access to DNA during DNA-templated processes such as DNA replication, transcription, and repair; this may require intact histone H4 tails. Within the ISWI chromatin-remodeling complexes, slides edge- and center-positioned histone octamers away from their original location on the DNA template. Catalytic activity and histone octamer sliding propensity is regulated and determined by components of the ISWI chromatin-remodeling complexes. The BAZ1A/ACF1-, BAZ1B/WSTF-, BAZ2A/TIP5- and BAZ2B-containing ISWI chromatin-remodeling complexes regulate the spacing of nucleosomes along the chromatin and have the ability to slide mononucleosomes to the center of a DNA template in an ATP-dependent manner. The CECR2- and RSF1-containing ISWI chromatin-remodeling complexes do not have the ability to slide mononucleosomes to the center of a DNA template. Binds to core histones together with RSF1, and is required for the assembly of regular nucleosome arrays by the RSF-5 ISWI chromatin-remodeling complex. Involved in DNA replication and together with BAZ1A/ACF1 is required for replication of pericentric heterochromatin in S-phase. Probably plays a role in repression of RNA polymerase I dependent transcription of the rDNA locus, through the recruitment of the SIN3/HDAC1 corepressor complex to the rDNA promoter. The WICH-5 ISWI chromatin-remodeling complex regulates the transcription of various genes, has a role in RNA polymerase I and RNA polymerase III transcription, mediates the histone H2AX phosphorylation at 'Tyr-142', and is involved in the maintenance of chromatin structures during DNA replication processes. Essential component of the NoRC-5 ISWI chromatin-remodeling complex, a complex that mediates silencing of a fraction of rDNA by recruiting histone-modifying enzymes and DNA methyltransferases, leading to heterochromatin formation and transcriptional silencing. Required for embryonic development and differentiation, and the proliferation of early blastocyst-derived stem cells. This Mus musculus (Mouse) protein is SWI/SNF-related matrix-associated actin-dependent regulator of chromatin subfamily A member 5 (Smarca5).